A 927-amino-acid polypeptide reads, in one-letter code: Nuclear factor of activated T-cells, cytoplasmic 2 (927 aa).

Residues 1–29 (MDVPEPQPDPDGGDGPGHEPGGSPQDELD) are disordered. Residues serine 23, serine 53, serine 54, serine 56, serine 99, serine 107, and serine 110 each carry the phosphoserine modification. The tract at residues 111–116 (PRIEIT) is calcineurin-binding. Residues 119 to 201 (HELMQAGGAL…CVSPNNAGPD (83 aa)) form a transactivation domain A (TAD-A) region. Phosphoserine is present on residues serine 136, serine 150, serine 170, serine 173, serine 174, serine 176, serine 177, serine 179, and serine 182. The tract at residues 163–177 (YREPLCLSPASSGSS) is required for cytoplasmic retention of the phosphorylated form. 2 tandem repeats follow at residues 186–202 (SPYTSPCVSPNNAGPDD) and 215–231 (SPRTSPIMSPRTSLAED). The tract at residues 186 to 292 (SPYTSPCVSP…PHVALQDDSI (107 aa)) is 3 X approximate SP repeats. Disordered stretches follow at residues 203 to 299 (LCPQ…YPPT) and 322 to 341 (SKIWKTSPDPTPVSTAPSKA). 5 positions are modified to phosphoserine: serine 215, serine 219, serine 223, serine 238, and serine 245. Residues 216–226 (PRTSPIMSPRT) show a composition bias toward polar residues. Residues 253-255 (KRR) carry the Nuclear localization signal motif. Phosphoserine occurs at positions 257, 270, 276, 278, 282, 328, and 365. A compositionally biased stretch (low complexity) spans 267–277 (PAASPQRSRSP). The stretch at 274-290 (SRSPSPQPSPHVALQDD) is one 3; approximate repeat. The RHD domain occupies 394-576 (ASLPPLEWPL…NPIECSQRSA (183 aa)). A DNA-binding region spans residues 423-430 (RAHYETEG). Serine 757, serine 759, and serine 761 each carry phosphoserine. Disordered regions lie at residues 790–812 (AGSQGQGQGSTLPHTSSASQQAS) and 841–903 (FGPS…QNLD). Over residues 798–812 (GSTLPHTSSASQQAS) the composition is skewed to polar residues. Position 860 is a phosphoserine (serine 860).

Member of the multicomponent NFATC transcription complex that consists of at least two components, a pre-existing cytoplasmic component NFATC2 and an inducible nuclear component NFATC1. Other members such as NFATC4, NFATC3 or members of the activating protein-1 family, MAF, GATA4 and Cbp/p300 can also bind the complex. The phosphorylated form specifically interacts with XPO1; which mediates nuclear export. NFATC proteins bind to DNA as monomers. Interacts with NFATC2IP. Interacts with FOXP3. Interacts with TBX21 ('Thr-302' phosphorylated form). Interacts with KAT2A. Interacts with HOMER2 and HOMER3; this interaction competes with calcineurin/PPP3CA-binding and hence prevents NFATC2 dephosphorylation and activation. Interacts with protein phosphatase PPP3CA/calcineurin A. Interacts with AKAP5 (via leucine zipper domain); this is required for NFATC2/NFAT1 recruitment to CRAC channels. In resting cells, phosphorylated by NFATC-kinase on at least 18 sites in the 99-365 region. Upon cell stimulation, all these sites except Ser-245 are dephosphorylated by calcineurin. Dephosphorylation induces a conformational change that simultaneously exposes an NLS and masks an NES, which results in nuclear localization. Simultaneously, one site among Ser-53; Ser-54 and Ser-56 is phosphorylated; which is required for full transcriptional activity. Post-translationally, ubiquitinated in endothelial cells by RNF213 downstream of the non-canonical Wnt signaling pathway, leading to its degradation by the proteasome. Expressed in spleen, heart, testis, brain, placenta, muscle and pancreas. Expressed in the thymus. Expressed in the lung. Expressed in cartilage.

Its subcellular location is the cytoplasm. It localises to the nucleus. Functionally, plays a role in the inducible expression of cytokine genes in T cells, especially in the induction of the IL-2, IL-3, IL-4, TNF-alpha or GM-CSF. Promotes invasive migration through the activation of GPC6 expression and WNT5A signaling pathway. Is involved in the negative regulation of chondrogenesis. Recruited by AKAP5 to ORAI1 pore-forming subunit of CRAC channels in Ca(2+) signaling microdomains where store-operated Ca(2+) influx is coupled to calmodulin and calcineurin signaling and activation of NFAT-dependent transcriptional responses. In Mus musculus (Mouse), this protein is Nuclear factor of activated T-cells, cytoplasmic 2 (Nfatc2).